A 456-amino-acid chain; its full sequence is Cytochrome c biogenesis protein CcsB (456 aa).

3 consecutive transmembrane segments (helical) span residues 29-49 (LRLAILLLLAIAIASATGTVI), 88-108 (AGWFLGLLILFGASLTACTFR), and 174-194 (VGPILVHAGMLVVLGGAIWGS).

This sequence belongs to the Ccs1/CcsB family. As to quaternary structure, may interact with CcsA.

It localises to the cellular thylakoid membrane. Required during biogenesis of c-type cytochromes (cytochrome c6 and cytochrome f) at the step of heme attachment. This is Cytochrome c biogenesis protein CcsB from Synechococcus sp. (strain ATCC 27144 / PCC 6301 / SAUG 1402/1) (Anacystis nidulans).